Reading from the N-terminus, the 1230-residue chain is ATP-dependent helicase/nuclease subunit A (1230 aa).

Residues 3–473 form the UvrD-like helicase ATP-binding domain; sequence TKFTKNQQRA…IDLADNFRSQ (471 aa). 24 to 31 contributes to the ATP binding site; the sequence is ASAGSGKT. A UvrD-like helicase C-terminal domain is found at 500–782; it reads EAKLVPKAAY…RIMTIHASKG (283 aa).

It belongs to the helicase family. AddA subfamily. In terms of assembly, heterodimer of AddA and AddB/RexB. Mg(2+) is required as a cofactor.

The catalysed reaction is Couples ATP hydrolysis with the unwinding of duplex DNA by translocating in the 3'-5' direction.. The enzyme catalyses ATP + H2O = ADP + phosphate + H(+). Its function is as follows. The heterodimer acts as both an ATP-dependent DNA helicase and an ATP-dependent, dual-direction single-stranded exonuclease. Recognizes the chi site generating a DNA molecule suitable for the initiation of homologous recombination. The AddA nuclease domain is required for chi fragment generation; this subunit has the helicase and 3' -&gt; 5' nuclease activities. This Leuconostoc mesenteroides subsp. mesenteroides (strain ATCC 8293 / DSM 20343 / BCRC 11652 / CCM 1803 / JCM 6124 / NCDO 523 / NBRC 100496 / NCIMB 8023 / NCTC 12954 / NRRL B-1118 / 37Y) protein is ATP-dependent helicase/nuclease subunit A.